We begin with the raw amino-acid sequence, 272 residues long: B3 domain-containing protein Os10g0323000 (272 aa).

The segment at residues 39-132 (RYGENRKHGQ…TLDLLILDKH (94 aa)) is a DNA-binding region (TF-B3 1). Residues 139–171 (PPSKRDLKLKSKRSTHQDSKGHPSNTDPGPSRI) form a disordered region. Residues 141-159 (SKRDLKLKSKRSTHQDSKG) show a composition bias toward basic and acidic residues. A DNA-binding region (TF-B3 2) is located at residues 180–272 (ESSANTQLLV…THLGVIVDIF (93 aa)).

The protein localises to the nucleus. In Oryza sativa subsp. japonica (Rice), this protein is B3 domain-containing protein Os10g0323000.